A 432-amino-acid chain; its full sequence is Tyrosine--tRNA ligase (432 aa).

The 'HIGH' region signature appears at 46–55 (PTRPDLHLGH). The 'KMSKS' region motif lies at 232 to 236 (KMSKS). K235 serves as a coordination point for ATP. In terms of domain architecture, S4 RNA-binding spans 369–430 (IWVARLFTLA…GKDRFVRVRL (62 aa)).

It belongs to the class-I aminoacyl-tRNA synthetase family. TyrS type 2 subfamily. Homodimer.

The protein localises to the cytoplasm. The catalysed reaction is tRNA(Tyr) + L-tyrosine + ATP = L-tyrosyl-tRNA(Tyr) + AMP + diphosphate + H(+). Its function is as follows. Catalyzes the attachment of tyrosine to tRNA(Tyr) in a two-step reaction: tyrosine is first activated by ATP to form Tyr-AMP and then transferred to the acceptor end of tRNA(Tyr). The protein is Tyrosine--tRNA ligase of Thermus thermophilus (strain ATCC BAA-163 / DSM 7039 / HB27).